We begin with the raw amino-acid sequence, 337 residues long: Hsp90 co-chaperone Cdc37-like 1 (337 aa).

Pro residues predominate over residues 1–11; the sequence is MEQPWPPPGPW. A disordered region spans residues 1-42; that stretch reads MEQPWPPPGPWSLPRAEGEAEEENDLDVFPSSPRCPQLPGGS. The interval 2 to 171 is self-association; sequence EQPWPPPGPW…YEQKIRHFGM (170 aa). 2 positions are modified to phosphoserine: serine 32 and serine 88. Residues 85–122 are a coiled coil; it reads NSESLDQEHAKAQIAVSELRQREEEWRQKEEALVQREK. The self-association and interaction with Hsp90 stretch occupies residues 147-277; sequence KDTEDEDKSE…SRVRLYSQSQ (131 aa). Positions 267-337 are interaction with Hsp70; it reads KSRVRLYSQS…DDEPKMMDTV (71 aa). Residues 278–337 form a required for interaction with STIP1 region; sequence SFQPMTVQNHVPHSGVGSIGLLESLPQNPDYLQYSINTALCSLNSVVHKEDDEPKMMDTV.

The protein belongs to the CDC37 family. In terms of assembly, self-associates. Forms complexes with Hsp70 and Hsp90. Interacts with CDC37, FKBP4, PPID and STIP1.

The protein resides in the cytoplasm. In terms of biological role, co-chaperone that binds to numerous proteins and promotes their interaction with Hsp70 and Hsp90. The protein is Hsp90 co-chaperone Cdc37-like 1 (CDC37L1) of Pongo abelii (Sumatran orangutan).